Here is a 72-residue protein sequence, read N- to C-terminus: Large ribosomal subunit protein bL31c (72 aa).

The protein belongs to the bacterial ribosomal protein bL31 family. Type A subfamily. Part of the 50S ribosomal subunit.

The protein resides in the plastid. It is found in the chloroplast. Its function is as follows. Binds the 23S rRNA. This is Large ribosomal subunit protein bL31c (rpl31) from Thalassiosira pseudonana (Marine diatom).